Consider the following 880-residue polypeptide: uncharacterized protein (880 aa).

10 disordered regions span residues 101–149 (KPIP…LRSE), 191–224 (PETS…ISTH), 240–273 (TTTT…PILK), 294–350 (NSNS…STTS), 425–446 (QPDS…ESQP), 470–508 (STST…SSSS), 536–561 (MESS…NDNS), 580–613 (APQS…NDDE), 682–713 (NTNT…NINN), and 844–880 (NSSG…KSEI). Positions 113-147 (ISIKEKEKEKEKEKEKEKEKEKEKEKEMKSTINLR) form a coiled coil. A compositionally biased stretch (basic and acidic residues) spans 115–149 (IKEKEKEKEKEKEKEKEKEKEKEKEMKSTINLRSE). Low complexity-rich tracts occupy residues 193 to 223 (TSTP…SIST) and 240 to 256 (TTTT…PSSS). Residues 257 to 271 (IAGITNPTSRSSSPI) show a composition bias toward polar residues. Over residues 294-332 (NSNSSSGGGNNNNKSISTPSSPIISRPITNKINNNNNNN) the composition is skewed to low complexity. The segment covering 333 to 342 (QPQLHYNQPQ) has biased composition (polar residues). Over residues 536 to 548 (MESSTTTTLLSEN) the composition is skewed to low complexity. A compositionally biased stretch (acidic residues) spans 589-613 (QPEDDPFFDFEDLSDDDDSNDNDDE). The span at 844-864 (NSSGSGNNSNDNSGSSSPSSS) shows a compositional bias: low complexity. The segment covering 865–880 (KTNTLNQQSICIKSEI) has biased composition (polar residues).

This is an uncharacterized protein from Dictyostelium discoideum (Social amoeba).